The sequence spans 339 residues: Heat-inducible transcription repressor HrcA (339 aa).

It belongs to the HrcA family.

In terms of biological role, negative regulator of class I heat shock genes (grpE-dnaK-dnaJ and groELS operons). Prevents heat-shock induction of these operons. In Paraburkholderia xenovorans (strain LB400), this protein is Heat-inducible transcription repressor HrcA.